The sequence spans 199 residues: NAD(P)H dehydrogenase (quinone) (199 aa).

Positions 4-190 (VLVLYYSAYG…AGARYQGRVI (187 aa)) constitute a Flavodoxin-like domain. FMN contacts are provided by residues 10-15 (SAYGHI) and 78-80 (TRF). Tyr12 serves as a coordination point for NAD(+). Trp98 provides a ligand contact to substrate. FMN-binding positions include 113 to 119 (STATQHG) and His134.

This sequence belongs to the WrbA family. FMN is required as a cofactor.

It carries out the reaction a quinone + NADH + H(+) = a quinol + NAD(+). It catalyses the reaction a quinone + NADPH + H(+) = a quinol + NADP(+). The chain is NAD(P)H dehydrogenase (quinone) from Bradyrhizobium sp. (strain BTAi1 / ATCC BAA-1182).